The following is a 210-amino-acid chain: Ribonuclease HII (210 aa).

The RNase H type-2 domain occupies 18–208; sequence YPVAGIDEAG…VNDIISQTKL (191 aa). A divalent metal cation-binding residues include aspartate 24, glutamate 25, and aspartate 116.

The protein belongs to the RNase HII family. Requires Mn(2+) as cofactor. It depends on Mg(2+) as a cofactor.

It is found in the cytoplasm. It carries out the reaction Endonucleolytic cleavage to 5'-phosphomonoester.. Endonuclease that specifically degrades the RNA of RNA-DNA hybrids. The polypeptide is Ribonuclease HII (Endomicrobium trichonymphae).